A 381-amino-acid polypeptide reads, in one-letter code: MTQTTHHTPDTARQADPFPVKGMDAVVFAVGNAKQAAHYYSTAFGMQLVAYSGPENGSRETASYVLTNGSARFVLTSVIKPATPWGHFLADHVAEHGDGVVDLAIEVPDARAAHAYAIEHGARSVAEPYELKDEHGTVVLAAIATYGKTRHTLVDRTGYDGPYLPGYVAAAPIVEPPAHRTFQAIDHCVGNVELGRMNEWVGFYNKVMGFTNMKEFVGDDIATEYSALMSKVVADGTLKVKFPINEPALAKKKSQIDEYLEFYGGAGVQHIALNTGDIVETVRTMRAAGVQFLDTPDSYYDTLGEWVGDTRVPVDTLRELKILADRDEDGYLLQIFTKPVQDRPTVFFEIIERHGSMGFGKGNFKALFEAIEREQEKRGNL.

2 consecutive VOC domains span residues 22-156 (GMDA…LVDR) and 184-338 (AIDH…IFTK). Residues His187, His270, and Glu349 each contribute to the Fe cation site.

The protein belongs to the 4HPPD family. As to quaternary structure, homodimer. The cofactor is Fe cation.

It catalyses the reaction 3-(4-hydroxyphenyl)pyruvate + O2 = homogentisate + CO2. Its pathway is amino-acid degradation; L-phenylalanine degradation; acetoacetate and fumarate from L-phenylalanine: step 3/6. This is 4-hydroxyphenylpyruvate dioxygenase (hpd) from Streptomyces avermitilis (strain ATCC 31267 / DSM 46492 / JCM 5070 / NBRC 14893 / NCIMB 12804 / NRRL 8165 / MA-4680).